The sequence spans 646 residues: Hypoxia up-regulated protein 1 (646 aa).

The N-terminal stretch at 1-22 (MRPLVCVLWMFLFALLSSHTES) is a signal peptide. Residues 572–646 (LFGGGSSVSE…KEEEKAEPQE (75 aa)) form a disordered region. The span at 590 to 610 (VQEEDEVPTEPTKEEEQESAD) shows a compositional bias: acidic residues. The segment covering 611–646 (PADKQQDKENNKEKGTSATNEKEEGKKEEEKAEPQE) has biased composition (basic and acidic residues).

It belongs to the heat shock protein 70 family.

Its subcellular location is the endoplasmic reticulum lumen. Functionally, has a pivotal role in cytoprotective cellular mechanisms triggered by oxygen deprivation. May play a role as a molecular chaperone and participate in protein folding. The protein is Hypoxia up-regulated protein 1 (hyou1) of Xenopus laevis (African clawed frog).